We begin with the raw amino-acid sequence, 198 residues long: NAD(P)H dehydrogenase (quinone) (198 aa).

Residues 4 to 189 (VLVLYYSMYG…SIARYQGEYV (186 aa)) form the Flavodoxin-like domain. Residues 10 to 15 (SMYGHI) and 78 to 80 (TRF) contribute to the FMN site. Tyr-12 is an NAD(+) binding site. Trp-98 is a substrate binding site. Residues 113 to 118 (STGTGG) and His-133 each bind FMN.

Belongs to the WrbA family. Requires FMN as cofactor.

The enzyme catalyses a quinone + NADH + H(+) = a quinol + NAD(+). The catalysed reaction is a quinone + NADPH + H(+) = a quinol + NADP(+). In Shigella dysenteriae serotype 1 (strain Sd197), this protein is NAD(P)H dehydrogenase (quinone).